A 218-amino-acid polypeptide reads, in one-letter code: Thiopurine S-methyltransferase (218 aa).

S-adenosyl-L-methionine-binding residues include Trp-10, Leu-45, Glu-66, and Arg-123.

It belongs to the class I-like SAM-binding methyltransferase superfamily. TPMT family.

Its subcellular location is the cytoplasm. The catalysed reaction is S-adenosyl-L-methionine + a thiopurine = S-adenosyl-L-homocysteine + a thiopurine S-methylether.. In Shewanella sp. (strain W3-18-1), this protein is Thiopurine S-methyltransferase.